The sequence spans 177 residues: Phosphatidylglycerol/phosphatidylinositol transfer protein (177 aa).

The first 17 residues, 1–17 (MRLSAAVIALLSTSAAA), serve as a signal peptide directing secretion. Positions 18-30 (FSVYRENSVSAND) are excised as a propeptide.

The protein belongs to the NPC2 family. Monomer.

Catalyzes the intermembrane transfer of phosphatidylglycerol and phosphatidylinositol. This Neurospora crassa (strain ATCC 24698 / 74-OR23-1A / CBS 708.71 / DSM 1257 / FGSC 987) protein is Phosphatidylglycerol/phosphatidylinositol transfer protein (npc-2).